Reading from the N-terminus, the 400-residue chain is Endoplasmin (400 aa).

K1 bears the N6-succinyllysine mark. N-linked (GlcNAc...) asparagine glycosylation occurs at N42. Residue S44 is modified to Phosphoserine. At K76 the chain carries N6-acetyllysine. 2 N-linked (GlcNAc...) asparagine glycosylation sites follow: N78 and N99. K230 is modified (N6-succinyllysine). The tract at residues 346–400 is disordered; that stretch reads IDPEAQVEEEPEEEPEDTTEDTEQDEEEEVDAGTEEEEEEEQETAKESTAEKDEL. Residues 350-387 show a composition bias toward acidic residues; the sequence is AQVEEEPEEEPEDTTEDTEQDEEEEVDAGTEEEEEEEQ. A Phosphothreonine modification is found at T379. Over residues 388–400 the composition is skewed to basic and acidic residues; the sequence is ETAKESTAEKDEL. The short motif at 397–400 is the Prevents secretion from ER element; it reads KDEL.

It belongs to the heat shock protein 90 family. In terms of assembly, homodimer; disulfide-linked. Component of an EIF2 complex at least composed of CELF1/CUGBP1, CALR, CALR3, EIF2S1, EIF2S2, HSP90B1 and HSPA5. Part of a large chaperone multiprotein complex comprising DNAJB11, HSP90B1, HSPA5, HYOU, PDIA2, PDIA4, PDIA6, PPIB, SDF2L1, UGGT1 and very small amounts of ERP29, but not, or at very low levels, CALR nor CANX. Interacts with AIMP1; regulates its retention in the endoplasmic reticulum. Hyperglycosylated form interacts with OS9; promoting its degradation by the endoplasmic reticulum associated degradation (ERAD). Interacts with CNPY3. This interaction is disrupted in the presence of ATP. Interacts with TLR4 and TLR9, but not with TLR3. Interacts with MZB1 in a calcium-dependent manner. Interacts with METTL23. Interacts with IL1B; the interaction facilitates cargo translocation into the ERGIC. Interacts with EIF2AK3. Phosphorylated by CK2. Post-translationally, N-glycosylated cotranslationally at Asn-217 by STT3A-containing OST-A complex: this glycosylation is constitutive. In response to various stress, 5 additional facultative sites (Asn-62, Asn-107, Asn-445, Asn-481 and Asn-502) can be glycosylated post-translationally by STT3B-containing OST-B complex, leading to a hyperglycosylated form that is degraded by the ER-associated degradation (ERAD) pathway. In normal conditions, the OST-A complex together with CCDC134 prevent glycosylation at facultative sites during protein folding, thereby preventing hyperglycosylation. Mechanistically, nascent HSP90B1 is tethered during translation to a specialized CCDC134-containing translocon that forms a microenvironment for its folding, in which STT3A associates with the SRT pseudosubstrate motif, and prevents access to facultative glycosylation sites until folding is completed, rendering its facultative sites inaccessible to the OST-B complex.

Its subcellular location is the endoplasmic reticulum lumen. It is found in the sarcoplasmic reticulum lumen. It localises to the melanosome. It catalyses the reaction ATP + H2O = ADP + phosphate + H(+). In terms of biological role, ATP-dependent chaperone involved in the processing of proteins in the endoplasmic reticulum, regulating their transport. Together with MESD, acts as a modulator of the Wnt pathway by promoting the folding of LRP6, a coreceptor of the canonical Wnt pathway. When associated with CNPY3, required for proper folding of Toll-like receptors. Promotes folding and trafficking of TLR4 to the cell surface. May participate in the unfolding of cytosolic leaderless cargos (lacking the secretion signal sequence) such as the interleukin 1/IL-1 to facilitate their translocation into the ERGIC (endoplasmic reticulum-Golgi intermediate compartment) and secretion; the translocation process is mediated by the cargo receptor TMED10. The polypeptide is Endoplasmin (HSP90B1) (Mesocricetus auratus (Golden hamster)).